A 94-amino-acid polypeptide reads, in one-letter code: Protein P19 (94 aa).

Functionally, binds to single-stranded DNA (ssDNA). In Acinetobacter calcoaceticus (Arthrobacter siderocapsulatus), this protein is Protein P19 (XIX).